The primary structure comprises 98 residues: Large ribosomal subunit protein eL21 (98 aa).

A compositionally biased stretch (basic residues) spans 1-17 (MQRSRGFRSKSRRKMTK). Residues 1 to 28 (MQRSRGFRSKSRRKMTKVVREGRSNPIT) form a disordered region.

The protein belongs to the eukaryotic ribosomal protein eL21 family.

This is Large ribosomal subunit protein eL21 from Methanobrevibacter smithii (strain ATCC 35061 / DSM 861 / OCM 144 / PS).